The following is a 426-amino-acid chain: UDP-N-acetylmuramoylalanine--D-glutamate ligase (426 aa).

112–118 (GSVGKST) provides a ligand contact to ATP.

Belongs to the MurCDEF family.

The protein localises to the cytoplasm. It catalyses the reaction UDP-N-acetyl-alpha-D-muramoyl-L-alanine + D-glutamate + ATP = UDP-N-acetyl-alpha-D-muramoyl-L-alanyl-D-glutamate + ADP + phosphate + H(+). It participates in cell wall biogenesis; peptidoglycan biosynthesis. Cell wall formation. Catalyzes the addition of glutamate to the nucleotide precursor UDP-N-acetylmuramoyl-L-alanine (UMA). This Thermosipho melanesiensis (strain DSM 12029 / CIP 104789 / BI429) protein is UDP-N-acetylmuramoylalanine--D-glutamate ligase.